Reading from the N-terminus, the 254-residue chain is 5-oxoprolinase subunit A (254 aa).

The protein belongs to the LamB/PxpA family. Forms a complex composed of PxpA, PxpB and PxpC.

It catalyses the reaction 5-oxo-L-proline + ATP + 2 H2O = L-glutamate + ADP + phosphate + H(+). Functionally, catalyzes the cleavage of 5-oxoproline to form L-glutamate coupled to the hydrolysis of ATP to ADP and inorganic phosphate. The protein is 5-oxoprolinase subunit A of Acinetobacter baumannii (strain ATCC 17978 / DSM 105126 / CIP 53.77 / LMG 1025 / NCDC KC755 / 5377).